Here is a 126-residue protein sequence, read N- to C-terminus: Hydrogenase maturation factor HypA (126 aa).

His-2 is a Ni(2+) binding site. 4 residues coordinate Zn(2+): Cys-78, Cys-81, Cys-97, and Cys-100.

Belongs to the HypA/HybF family.

Its function is as follows. Involved in the maturation of [NiFe] hydrogenases. Required for nickel insertion into the metal center of the hydrogenase. This chain is Hydrogenase maturation factor HypA, found in Methanococcus maripaludis (strain C7 / ATCC BAA-1331).